The chain runs to 874 residues: Alanine--tRNA ligase (874 aa).

Residues His564, His568, Cys665, and His669 each contribute to the Zn(2+) site.

It belongs to the class-II aminoacyl-tRNA synthetase family. It depends on Zn(2+) as a cofactor.

It localises to the cytoplasm. The enzyme catalyses tRNA(Ala) + L-alanine + ATP = L-alanyl-tRNA(Ala) + AMP + diphosphate. Catalyzes the attachment of alanine to tRNA(Ala) in a two-step reaction: alanine is first activated by ATP to form Ala-AMP and then transferred to the acceptor end of tRNA(Ala). Also edits incorrectly charged Ser-tRNA(Ala) and Gly-tRNA(Ala) via its editing domain. The polypeptide is Alanine--tRNA ligase (Burkholderia multivorans (strain ATCC 17616 / 249)).